The primary structure comprises 210 residues: Guanylate kinase (210 aa).

Positions 5-183 (GILFVISAPS…AVEEFKSIIL (179 aa)) constitute a Guanylate kinase-like domain. Residue 12-19 (APSGAGKT) participates in ATP binding.

Belongs to the guanylate kinase family.

It is found in the cytoplasm. It catalyses the reaction GMP + ATP = GDP + ADP. In terms of biological role, essential for recycling GMP and indirectly, cGMP. In Syntrophotalea carbinolica (strain DSM 2380 / NBRC 103641 / GraBd1) (Pelobacter carbinolicus), this protein is Guanylate kinase.